We begin with the raw amino-acid sequence, 149 residues long: Small ribosomal subunit protein uS19w (149 aa).

This sequence belongs to the universal ribosomal protein uS19 family.

Its subcellular location is the cytoplasm. This is Small ribosomal subunit protein uS19w (RPS15E) from Arabidopsis thaliana (Mouse-ear cress).